The chain runs to 834 residues: Glycerol-3-phosphate acyltransferase (834 aa).

The HXXXXD motif signature appears at 309 to 314 (CHRSHI).

Belongs to the GPAT/DAPAT family.

It localises to the cell inner membrane. It carries out the reaction sn-glycerol 3-phosphate + an acyl-CoA = a 1-acyl-sn-glycero-3-phosphate + CoA. It functions in the pathway phospholipid metabolism; CDP-diacylglycerol biosynthesis; CDP-diacylglycerol from sn-glycerol 3-phosphate: step 1/3. This Pseudomonas fluorescens (strain ATCC BAA-477 / NRRL B-23932 / Pf-5) protein is Glycerol-3-phosphate acyltransferase.